Consider the following 348-residue polypeptide: Putative agmatine deiminase (348 aa).

Cys335 serves as the catalytic Amidino-cysteine intermediate.

This sequence belongs to the agmatine deiminase family.

The enzyme catalyses agmatine + H2O = N-carbamoylputrescine + NH4(+). This Legionella pneumophila subsp. pneumophila (strain Philadelphia 1 / ATCC 33152 / DSM 7513) protein is Putative agmatine deiminase.